The sequence spans 208 residues: LexA repressor (208 aa).

The H-T-H motif DNA-binding region spans Val-29–Asn-49. Active-site for autocatalytic cleavage activity residues include Ser-129 and Lys-167.

Belongs to the peptidase S24 family. Homodimer.

It catalyses the reaction Hydrolysis of Ala-|-Gly bond in repressor LexA.. Its function is as follows. Represses a number of genes involved in the response to DNA damage (SOS response), including recA and lexA. In the presence of single-stranded DNA, RecA interacts with LexA causing an autocatalytic cleavage which disrupts the DNA-binding part of LexA, leading to derepression of the SOS regulon and eventually DNA repair. The polypeptide is LexA repressor (Limosilactobacillus fermentum (strain NBRC 3956 / LMG 18251) (Lactobacillus fermentum)).